The following is a 694-amino-acid chain: Frizzled-8 (694 aa).

The N-terminal stretch at 1–27 is a signal peptide; that stretch reads MEWGYLLEVTSLLAALALLQRSSGAAA. The Extracellular segment spans residues 28–275; the sequence is ASAKELACQE…NPFFSQDERA (248 aa). The FZ domain occupies 30–151; that stretch reads AKELACQEIT…GNPDTLCMDY (122 aa). 5 disulfides stabilise this stretch: C35-C96, C43-C89, C80-C118, C107-C148, and C111-C135. N-linked (GlcNAc...) asparagine glycosylation is present at N49. Residue 71-78 coordinates hexadecanoate; the sequence is QFWPLVEI. The interval 95–100 is wnt-binding; the sequence is ICLEDY. A wnt-binding region spans residues 147-152; that stretch reads LCMDYN. A glycan (N-linked (GlcNAc...) asparagine) is linked at N152. The tract at residues 155–226 is disordered; sequence DLTTAAPSPP…KARPPGGGAA (72 aa). Over residues 161 to 175 the composition is skewed to pro residues; that stretch reads PSPPRRLPPPPPGEQ. A compositionally biased stretch (low complexity) spans 176–186; sequence PPSGSGHGRPP. A compositionally biased stretch (gly residues) spans 210-225; the sequence is RGGGGGGKARPPGGGA. The helical transmembrane segment at 276–296 threads the bilayer; the sequence is FTVFWIGLWSVLCFVSTFATV. The Cytoplasmic portion of the chain corresponds to 297-312; the sequence is STFLIDMERFKYPERP. The helical transmembrane segment at 313 to 333 threads the bilayer; sequence IIFLSACYLFVSVGYLVRLVA. At 334–396 the chain is on the extracellular side; it reads GHEKVACSGG…RYETTGPALC (63 aa). The chain crosses the membrane as a helical span at residues 397–417; sequence TVVFLLVYFFGMASSIWWVIL. Over 418 to 439 the chain is Cytoplasmic; the sequence is SLTWFLAAGMKWGNEAIAGYSQ. A helical membrane pass occupies residues 440-460; sequence YFHLAAWLVPSVKSIAVLALS. Over 461–483 the chain is Extracellular; it reads SVDGDPVAGICYVGNQSLDNLRG. N-linked (GlcNAc...) asparagine glycosylation is present at N475. Residues 484 to 504 traverse the membrane as a helical segment; sequence FVLAPLVIYLFIGTMFLLAGF. Topologically, residues 505–532 are cytoplasmic; it reads VSLFRIRSVIKQQDGPTKTHKLEKLMIR. Residues 533–553 form a helical membrane-spanning segment; the sequence is LGLFTVLYTVPAAVVVACLFY. At 554-584 the chain is on the extracellular side; sequence EQHNRPRWEATHNCPCLRDLQPDQARRPDYA. The chain crosses the membrane as a helical span at residues 585–605; sequence VFMLKYFMCLVVGITSGVWVW. The Cytoplasmic segment spans residues 606–694; it reads SGKTLESWRS…YPKQMPLSQV (89 aa). Positions 608–613 match the Lys-Thr-X-X-X-Trp motif, mediates interaction with the PDZ domain of Dvl family members motif; the sequence is KTLESW. A compositionally biased stretch (gly residues) spans 648–664; that stretch reads GGGGPGGGGGPGGGGGS. Positions 648 to 668 are disordered; sequence GGGGPGGGGGPGGGGGSLYSD. A PDZ-binding motif is present at residues 692–694; it reads SQV.

Belongs to the G-protein coupled receptor Fz/Smo family. Component of a Wnt-signaling complex that contains a WNT protein, a FZD protein and LRP5 or LRP6. Interacts directly with LRP5 or LRP6; the interaction is promoted by Wnt-binding and signaling and inhibited by DKK1. Interacts with GPOC, RSPO1 and RSPO3. Interacts with glypican GPC3. Ubiquitinated by ZNRF3, leading to its degradation by the proteasome. As to expression, most abundant in fetal kidney, followed by brain and lung. In adult tissues, expressed in kidney, heart, pancreas and skeletal muscle.

The protein resides in the membrane. Its subcellular location is the golgi apparatus. It is found in the cell membrane. Receptor for Wnt proteins. Component of the Wnt-Fzd-LRP5-LRP6 complex that triggers beta-catenin signaling through inducing aggregation of receptor-ligand complexes into ribosome-sized signalosomes. The beta-catenin canonical signaling pathway leads to the activation of disheveled proteins, inhibition of GSK-3 kinase, nuclear accumulation of beta-catenin and activation of Wnt target genes. A second signaling pathway involving PKC and calcium fluxes has been seen for some family members, but it is not yet clear if it represents a distinct pathway or if it can be integrated in the canonical pathway, as PKC seems to be required for Wnt-mediated inactivation of GSK-3 kinase. Both pathways seem to involve interactions with G-proteins. May be involved in transduction and intercellular transmission of polarity information during tissue morphogenesis and/or in differentiated tissues. Coreceptor along with RYK of Wnt proteins, such as WNT1. This is Frizzled-8 (FZD8) from Homo sapiens (Human).